Reading from the N-terminus, the 149-residue chain is D-aminoacyl-tRNA deacylase (149 aa).

Positions 139-140 (GP) match the Gly-cisPro motif, important for rejection of L-amino acids motif.

The protein belongs to the DTD family. In terms of assembly, homodimer.

Its subcellular location is the cytoplasm. The catalysed reaction is glycyl-tRNA(Ala) + H2O = tRNA(Ala) + glycine + H(+). The enzyme catalyses a D-aminoacyl-tRNA + H2O = a tRNA + a D-alpha-amino acid + H(+). In terms of biological role, an aminoacyl-tRNA editing enzyme that deacylates mischarged D-aminoacyl-tRNAs. Also deacylates mischarged glycyl-tRNA(Ala), protecting cells against glycine mischarging by AlaRS. Acts via tRNA-based rather than protein-based catalysis; rejects L-amino acids rather than detecting D-amino acids in the active site. By recycling D-aminoacyl-tRNA to D-amino acids and free tRNA molecules, this enzyme counteracts the toxicity associated with the formation of D-aminoacyl-tRNA entities in vivo and helps enforce protein L-homochirality. This Schizosaccharomyces pombe (strain 972 / ATCC 24843) (Fission yeast) protein is D-aminoacyl-tRNA deacylase (dtd1).